The chain runs to 393 residues: 1-deoxy-D-xylulose 5-phosphate reductoisomerase (393 aa).

Residues T10, G11, S12, I13, R37, Q38, and N124 each contribute to the NADPH site. K125 serves as a coordination point for 1-deoxy-D-xylulose 5-phosphate. Residue E126 participates in NADPH binding. D150 is a Mn(2+) binding site. 1-deoxy-D-xylulose 5-phosphate contacts are provided by S151, E152, S179, and H202. E152 is a Mn(2+) binding site. G208 serves as a coordination point for NADPH. 1-deoxy-D-xylulose 5-phosphate is bound by residues S215, N220, K221, and E224. E224 contacts Mn(2+).

It belongs to the DXR family. Mg(2+) is required as a cofactor. It depends on Mn(2+) as a cofactor.

The catalysed reaction is 2-C-methyl-D-erythritol 4-phosphate + NADP(+) = 1-deoxy-D-xylulose 5-phosphate + NADPH + H(+). Its pathway is isoprenoid biosynthesis; isopentenyl diphosphate biosynthesis via DXP pathway; isopentenyl diphosphate from 1-deoxy-D-xylulose 5-phosphate: step 1/6. In terms of biological role, catalyzes the NADPH-dependent rearrangement and reduction of 1-deoxy-D-xylulose-5-phosphate (DXP) to 2-C-methyl-D-erythritol 4-phosphate (MEP). The sequence is that of 1-deoxy-D-xylulose 5-phosphate reductoisomerase from Cupriavidus necator (strain ATCC 17699 / DSM 428 / KCTC 22496 / NCIMB 10442 / H16 / Stanier 337) (Ralstonia eutropha).